A 192-amino-acid polypeptide reads, in one-letter code: Anthranilate synthase component 2 (192 aa).

The Glutamine amidotransferase type-1 domain occupies 1–192 (MIVLVNNRDS…KNFVEMSRNG (192 aa)). Residue 50–52 (GPG) coordinates L-glutamine. Cys78 acts as the Nucleophile; for GATase activity in catalysis. Residues Gln82 and 127-128 (SL) contribute to the L-glutamine site. Residues His165 and Glu167 each act as for GATase activity in the active site.

In terms of assembly, heterotetramer consisting of two non-identical subunits: a beta subunit (TrpG) and a large alpha subunit (TrpE).

It catalyses the reaction chorismate + L-glutamine = anthranilate + pyruvate + L-glutamate + H(+). Its pathway is amino-acid biosynthesis; L-tryptophan biosynthesis; L-tryptophan from chorismate: step 1/5. Functionally, part of a heterotetrameric complex that catalyzes the two-step biosynthesis of anthranilate, an intermediate in the biosynthesis of L-tryptophan. In the first step, the glutamine-binding beta subunit (TrpG) of anthranilate synthase (AS) provides the glutamine amidotransferase activity which generates ammonia as a substrate that, along with chorismate, is used in the second step, catalyzed by the large alpha subunit of AS (TrpE) to produce anthranilate. In the absence of TrpG, TrpE can synthesize anthranilate directly from chorismate and high concentrations of ammonia. This Thermococcus kodakarensis (strain ATCC BAA-918 / JCM 12380 / KOD1) (Pyrococcus kodakaraensis (strain KOD1)) protein is Anthranilate synthase component 2 (trpG).